A 294-amino-acid chain; its full sequence is 4-diphosphocytidyl-2-C-methyl-D-erythritol kinase (294 aa).

Lys-11 is a catalytic residue. Residue 96–106 (PVAAGIGGGSA) participates in ATP binding. Residue Asp-138 is part of the active site.

It belongs to the GHMP kinase family. IspE subfamily.

It catalyses the reaction 4-CDP-2-C-methyl-D-erythritol + ATP = 4-CDP-2-C-methyl-D-erythritol 2-phosphate + ADP + H(+). Its pathway is isoprenoid biosynthesis; isopentenyl diphosphate biosynthesis via DXP pathway; isopentenyl diphosphate from 1-deoxy-D-xylulose 5-phosphate: step 3/6. In terms of biological role, catalyzes the phosphorylation of the position 2 hydroxy group of 4-diphosphocytidyl-2C-methyl-D-erythritol. This Rhodopseudomonas palustris (strain BisB5) protein is 4-diphosphocytidyl-2-C-methyl-D-erythritol kinase.